We begin with the raw amino-acid sequence, 696 residues long: Polyribonucleotide nucleotidyltransferase (696 aa).

Mg(2+) is bound by residues Asp486 and Asp492. Residues 553 to 612 enclose the KH domain; the sequence is PRITQKQIPKDRIGELIGPGGKMIRAIIEQSGSEISVDDSGKVTIASPSEESKEKAIAMI. Positions 622–690 constitute an S1 motif domain; sequence GKIYDGVIKR…KMGKIDLSRK (69 aa).

It belongs to the polyribonucleotide nucleotidyltransferase family. Mg(2+) is required as a cofactor.

Its subcellular location is the cytoplasm. It catalyses the reaction RNA(n+1) + phosphate = RNA(n) + a ribonucleoside 5'-diphosphate. Its function is as follows. Involved in mRNA degradation. Catalyzes the phosphorolysis of single-stranded polyribonucleotides processively in the 3'- to 5'-direction. The protein is Polyribonucleotide nucleotidyltransferase of Leptospira biflexa serovar Patoc (strain Patoc 1 / ATCC 23582 / Paris).